The chain runs to 147 residues: Hemoglobin subunit beta (147 aa).

The region spanning leucine 3–histidine 147 is the Globin domain. The residue at position 13 (threonine 13) is a Phosphothreonine. Serine 45 bears the Phosphoserine mark. At lysine 60 the chain carries N6-acetyllysine. Residue histidine 64 participates in heme b binding. An N6-acetyllysine modification is found at lysine 83. A heme b-binding site is contributed by histidine 93. The residue at position 94 (cysteine 94) is an S-nitrosocysteine. Lysine 145 is modified (N6-acetyllysine).

Belongs to the globin family. In terms of assembly, heterotetramer of two alpha chains and two beta chains. Red blood cells.

Involved in oxygen transport from the lung to the various peripheral tissues. This chain is Hemoglobin subunit beta (HBB), found in Eulemur fulvus fulvus (Brown lemur).